The chain runs to 242 residues: ATP synthase subunit a (242 aa).

6 helical membrane-spanning segments follow: residues 29–49 (SSIYMLLASILALTYFYLAFY), 84–104 (FIPLVFSLFIFILFCNLLGMT), 114–134 (IIVTFTLAILVFLTVTIVGFV), 140–160 (FLTLFLPHGTPLWLAPLMIVI), 189–209 (VIAGFTVSLMIYLKFLPIPLM), and 210–230 (MILIGFEIFVAILQAYIFTIL).

The protein belongs to the ATPase A chain family. In terms of assembly, F-type ATPases have 2 components, CF(1) - the catalytic core - and CF(0) - the membrane proton channel. CF(1) has five subunits: alpha(3), beta(3), gamma(1), delta(1), epsilon(1). CF(0) has three main subunits: a(1), b(2) and c(9-12). The alpha and beta chains form an alternating ring which encloses part of the gamma chain. CF(1) is attached to CF(0) by a central stalk formed by the gamma and epsilon chains, while a peripheral stalk is formed by the delta and b chains.

Its subcellular location is the cell inner membrane. In terms of biological role, key component of the proton channel; it plays a direct role in the translocation of protons across the membrane. The protein is ATP synthase subunit a of Rickettsia massiliae (strain Mtu5).